The chain runs to 567 residues: DNA ligase B (567 aa).

K126 acts as the N6-AMP-lysine intermediate in catalysis.

Belongs to the NAD-dependent DNA ligase family. LigB subfamily.

It carries out the reaction NAD(+) + (deoxyribonucleotide)n-3'-hydroxyl + 5'-phospho-(deoxyribonucleotide)m = (deoxyribonucleotide)n+m + AMP + beta-nicotinamide D-nucleotide.. Its function is as follows. Catalyzes the formation of phosphodiester linkages between 5'-phosphoryl and 3'-hydroxyl groups in double-stranded DNA using NAD as a coenzyme and as the energy source for the reaction. This chain is DNA ligase B, found in Pseudomonas putida (strain W619).